A 767-amino-acid chain; its full sequence is TBC1 domain family member 16 (767 aa).

2 disordered regions span residues 93-138 (EALR…TPKD) and 169-228 (GVDG…SFDS). Positions 107–117 (KAPRPRGRRTR) are enriched in basic residues. The span at 175–194 (PASQPACSPSGILSTVSPQD) shows a compositional bias: polar residues. Basic and acidic residues predominate over residues 197 to 206 (EEGREPRPEA). Positions 425–635 (GIDVSIRGEV…RIWEACWAHY (211 aa)) constitute a Rab-GAP TBC domain. The disordered stretch occupies residues 729–767 (HPGSESCPYGGTVEMPSPKSLREGKKGPKTPQDGFGFRR).

In terms of biological role, may act as a GTPase-activating protein for Rab family protein(s). The chain is TBC1 domain family member 16 (TBC1D16) from Homo sapiens (Human).